The following is a 429-amino-acid chain: Ribosomal RNA small subunit methyltransferase B (429 aa).

S-adenosyl-L-methionine is bound by residues 254-260 (CAAPGGK), Asp-277, Asp-303, and Asp-322. Cys-375 (nucleophile) is an active-site residue.

It belongs to the class I-like SAM-binding methyltransferase superfamily. RsmB/NOP family.

The protein localises to the cytoplasm. It catalyses the reaction cytidine(967) in 16S rRNA + S-adenosyl-L-methionine = 5-methylcytidine(967) in 16S rRNA + S-adenosyl-L-homocysteine + H(+). Its function is as follows. Specifically methylates the cytosine at position 967 (m5C967) of 16S rRNA. In Pectobacterium carotovorum subsp. carotovorum (strain PC1), this protein is Ribosomal RNA small subunit methyltransferase B.